We begin with the raw amino-acid sequence, 358 residues long: 3-dehydroquinate synthase (358 aa).

NAD(+)-binding positions include Asp69–Lys74, Gly103–Asp107, Thr127–Thr128, Lys140, Lys149, and Thr167–Thr170. Zn(2+) is bound by residues Glu182, His245, and His262.

This sequence belongs to the sugar phosphate cyclases superfamily. Dehydroquinate synthase family. The cofactor is Co(2+). It depends on Zn(2+) as a cofactor. NAD(+) is required as a cofactor.

Its subcellular location is the cytoplasm. The catalysed reaction is 7-phospho-2-dehydro-3-deoxy-D-arabino-heptonate = 3-dehydroquinate + phosphate. It functions in the pathway metabolic intermediate biosynthesis; chorismate biosynthesis; chorismate from D-erythrose 4-phosphate and phosphoenolpyruvate: step 2/7. In terms of biological role, catalyzes the conversion of 3-deoxy-D-arabino-heptulosonate 7-phosphate (DAHP) to dehydroquinate (DHQ). This chain is 3-dehydroquinate synthase, found in Hydrogenovibrio crunogenus (strain DSM 25203 / XCL-2) (Thiomicrospira crunogena).